Consider the following 221-residue polypeptide: Adenylate kinase (221 aa).

10-15 (GAGKGT) provides a ligand contact to ATP. The interval 30-59 (STGDMLRAAVKAGTEFGVAAKKIMDAGGLV) is NMP. AMP contacts are provided by residues T31, R36, 57-59 (GLV), 85-88 (GFPR), and Q92. The segment at 122 to 159 (GRRVHPASGRTYHIKYNPPKVEGKDDVTGDALIQRDDD) is LID. ATP is bound by residues R123 and 132–133 (TY). 2 residues coordinate AMP: R156 and R167. G207 lines the ATP pocket.

It belongs to the adenylate kinase family. In terms of assembly, monomer.

The protein localises to the cytoplasm. It carries out the reaction AMP + ATP = 2 ADP. Its pathway is purine metabolism; AMP biosynthesis via salvage pathway; AMP from ADP: step 1/1. In terms of biological role, catalyzes the reversible transfer of the terminal phosphate group between ATP and AMP. Plays an important role in cellular energy homeostasis and in adenine nucleotide metabolism. The protein is Adenylate kinase of Polynucleobacter asymbioticus (strain DSM 18221 / CIP 109841 / QLW-P1DMWA-1) (Polynucleobacter necessarius subsp. asymbioticus).